A 271-amino-acid polypeptide reads, in one-letter code: Formamidopyrimidine-DNA glycosylase (271 aa).

Catalysis depends on Pro-2, which acts as the Schiff-base intermediate with DNA. Residue Glu-3 is the Proton donor of the active site. The active-site Proton donor; for beta-elimination activity is the Lys-58. Residues His-92, Arg-111, and Lys-152 each contribute to the DNA site. The FPG-type zinc finger occupies 237-271; sequence YVYGKVQKPCKICNNIITLIRQNGRSTYFCNACQN. The active-site Proton donor; for delta-elimination activity is Arg-261.

This sequence belongs to the FPG family. As to quaternary structure, monomer. Zn(2+) serves as cofactor.

The catalysed reaction is Hydrolysis of DNA containing ring-opened 7-methylguanine residues, releasing 2,6-diamino-4-hydroxy-5-(N-methyl)formamidopyrimidine.. It catalyses the reaction 2'-deoxyribonucleotide-(2'-deoxyribose 5'-phosphate)-2'-deoxyribonucleotide-DNA = a 3'-end 2'-deoxyribonucleotide-(2,3-dehydro-2,3-deoxyribose 5'-phosphate)-DNA + a 5'-end 5'-phospho-2'-deoxyribonucleoside-DNA + H(+). Functionally, involved in base excision repair of DNA damaged by oxidation or by mutagenic agents. Acts as a DNA glycosylase that recognizes and removes damaged bases. Has a preference for oxidized purines, such as 7,8-dihydro-8-oxoguanine (8-oxoG). Has AP (apurinic/apyrimidinic) lyase activity and introduces nicks in the DNA strand. Cleaves the DNA backbone by beta-delta elimination to generate a single-strand break at the site of the removed base with both 3'- and 5'-phosphates. In Wolbachia sp. subsp. Drosophila simulans (strain wRi), this protein is Formamidopyrimidine-DNA glycosylase.